A 30-amino-acid chain; its full sequence is Trypsin inhibitor 4 (30 aa).

3 cysteine pairs are disulfide-bonded: Cys3-Cys20, Cys10-Cys22, and Cys16-Cys28.

It belongs to the protease inhibitor I7 (squash-type serine protease inhibitor) family.

It localises to the secreted. Inhibits trypsin; probably participates in a plant defense mechanism. The sequence is that of Trypsin inhibitor 4 from Momordica charantia (Bitter gourd).